The primary structure comprises 497 residues: Amino acid oxidase fsqB (497 aa).

Residues V14, F15, D38, N53, A57, N58, R63, V64, and V211 each contribute to the FAD site. C414 is modified (S-8alpha-FAD cysteine). Positions 447 and 448 each coordinate FAD.

This sequence belongs to the MSOX/MTOX family. In terms of assembly, dimer. The cofactor is FAD.

It catalyses the reaction (2S,4S,5S)-2-amino-6-(3,4-dihydroxyphenyl)-4-hydroxy-5-(methylamino)hexanoyl-[peptidyl-carrier protein] + O2 = (2S,4S)-2-amino-4-[(3S)-7,8-dihydroxy-1,2,3,4-tetrahydroisoquinolin-3-yl]-4-hydroxybutanoyl-[peptidyl-carrier protein] + H2O2. The enzyme catalyses N-methyl-L-dopa + O2 = (3S)-7,8-dihydroxy-1,2,3,4-tetrahydroisoquinoline-3-carboxylate + H2O2. It carries out the reaction N-methyl-D-dopa + O2 = (3R)-7,8-dihydroxy-1,2,3,4-tetrahydroisoquinoline-3-carboxylate + H2O2. It functions in the pathway secondary metabolite biosynthesis. Functionally, amino acid oxidase; part of the gene cluster that mediates the biosynthesis of the isoquinoline alkaloids fumisoquin A, fumisoquin B and fumisoquin C; as well as small amounts of fumipyrrole as a shunt metabolite. The products of the cluster lead to a brown coloration and are important for growth and conidiation. The nonribosomal peptide synthetase-like protein fsqF, which lacks a canonical condensation domain, is required for addition of a serine-derived dehydroalanine moiety to activated tyrosine but is not essential for the subsequent steps leading to isoquinoline formation. A different enzyme, most likely the ATP-grasp enzyme fsqD, is responsible for activation of tyrosine. Three additional enzymes encoded by the fsq cluster, the N-methyltransferase fsqC, the phenol 2-monooxygenase fsqG and the FAD-dependent oxidase fsqB, catalyze the formation of the isoquinoline ring system in the fumisoquins. FsqB converts the fspF thiolation domain-bound (2S,4S,5S)-2-amino-6-(3,4-dihydroxyphenyl)-4-hydroxy-5-(methylamino)hexanoyl into isoquinoline. The cyclization most likely proceeds via a two-step mechanism, beginning with FAD-dependent oxidation of the methyl group to an iminium species followed by electrophilic attack on the deprotonated phenol. In terms of biological role, is able to convert N-methyl-3,4-dihydroxy-DL-phenylalanine (N-methyl-DOPA) directly into cyclic isoquinoline, in vitro. The absence of the meta-hydroxyl group, as in L-N-methyl-tyrosine, leads to a 25-fold lower rate of reduction and the formation of the demethylated product L-tyrosine, instead of a cyclic product. Does not accept the D-stereoisomer of N-methyltyrosine, in contrast to N-methyl-DOPA, for which both stereoisomers are oxidized with similar rates. The polypeptide is Amino acid oxidase fsqB (Aspergillus fumigatus (strain ATCC MYA-4609 / CBS 101355 / FGSC A1100 / Af293) (Neosartorya fumigata)).